A 282-amino-acid polypeptide reads, in one-letter code: Homeobox protein Hox-C12 (282 aa).

Disordered stretches follow at residues 94 to 129 and 147 to 214; these read YYRE…PLEP and GGDG…NSRS. The span at 162 to 175 shows a compositional bias: low complexity; that stretch reads SCQSLESDSSSSLL. The segment at residues 214–273 is a DNA-binding region (homeobox); sequence SRKKRKPYSKLQLAELEGEFLVNEFITRQRRRELSDRLNLSDQQVKIWFQNRRMKKKRLL.

Belongs to the Abd-B homeobox family.

Its subcellular location is the nucleus. In terms of biological role, sequence-specific transcription factor which is part of a developmental regulatory system that provides cells with specific positional identities on the anterior-posterior axis. This is Homeobox protein Hox-C12 (HOXC12) from Homo sapiens (Human).